The chain runs to 238 residues: Sugar fermentation stimulation protein homolog (238 aa).

The protein belongs to the SfsA family.

This chain is Sugar fermentation stimulation protein homolog, found in Vibrio vulnificus (strain CMCP6).